The following is a 154-amino-acid chain: SsrA-binding protein (154 aa).

This sequence belongs to the SmpB family.

It localises to the cytoplasm. Required for rescue of stalled ribosomes mediated by trans-translation. Binds to transfer-messenger RNA (tmRNA), required for stable association of tmRNA with ribosomes. tmRNA and SmpB together mimic tRNA shape, replacing the anticodon stem-loop with SmpB. tmRNA is encoded by the ssrA gene; the 2 termini fold to resemble tRNA(Ala) and it encodes a 'tag peptide', a short internal open reading frame. During trans-translation Ala-aminoacylated tmRNA acts like a tRNA, entering the A-site of stalled ribosomes, displacing the stalled mRNA. The ribosome then switches to translate the ORF on the tmRNA; the nascent peptide is terminated with the 'tag peptide' encoded by the tmRNA and targeted for degradation. The ribosome is freed to recommence translation, which seems to be the essential function of trans-translation. The polypeptide is SsrA-binding protein (Gluconacetobacter diazotrophicus (strain ATCC 49037 / DSM 5601 / CCUG 37298 / CIP 103539 / LMG 7603 / PAl5)).